The chain runs to 671 residues: MPAMGTALPRAMASTASVSTSTGSSELSSLSDNINNPADISVIVIYFVVVMAVGVWAMVKTNRSTVGGFFLAGRSMTWWPMGASLFASNIGSGHFVGLAGTGAATGIAVTAFESHSFALLLVLGWFFVPIYIKAGVMTMPEYLRKRFGGKRLQIYLSVLSLFICVILTISADIFSGAIFIKLALGLDLYLAIFILLAITAVFTITGGLASVIYTDTLQAIIMLVGSFILMIYAFVEVGGYESFTEKYMNAIPSVVEGDNLTISPKCYTPQPDSFHIFRDAVTGDIPWPGTAFGMPITALWYWCINQVIVQRCLCGKNMSHVKAACIVCGYLKLLPIFFMVMPGMISRILYTDMVACVVPSECVKQCGVDVGCTNYAYPMLVLKLMPMGLRGLMLSVMLASLMSSLTSIFNSASTLFTMDLYTKIRKKASERELLIAGRLFVSVLIVTSILWVPIVEVSQGGQLIHYTEAISSYLGPPIAAVFLVAIFCKRVNEQGAFWGLMVGLVLGLIRMIAEFSYGTGSCLAPSSCPKVICGVHYLYYAIILFFVSILVILGVSYLTKPIPDVHLYRLCWSLRNSEEERIDLDAEDREENEADARTEEDQTEKPRGCLKKTYDLCCGLQRAEPKLTKEEEEALKKKLTDTSEKPFWRTVVNVNVIVLLAVAAFFYGYFA.

Over 1–38 (MPAMGTALPRAMASTASVSTSTGSSELSSLSDNINNPA) the chain is Cytoplasmic. Residues 39–59 (DISVIVIYFVVVMAVGVWAMV) traverse the membrane as a helical segment. The Extracellular portion of the chain corresponds to 60-65 (KTNRST). A helical membrane pass occupies residues 66–86 (VGGFFLAGRSMTWWPMGASLF). At 87–89 (ASN) the chain is on the cytoplasmic side. Residues 90 to 110 (IGSGHFVGLAGTGAATGIAVT) form a helical membrane-spanning segment. The Extracellular portion of the chain corresponds to 111-116 (AFESHS). The helical transmembrane segment at 117 to 137 (FALLLVLGWFFVPIYIKAGVM) threads the bilayer. The Cytoplasmic portion of the chain corresponds to 138 to 159 (TMPEYLRKRFGGKRLQIYLSVL). The chain crosses the membrane as a helical span at residues 160–180 (SLFICVILTISADIFSGAIFI). Position 181 (Lys-181) is a topological domain, extracellular. Residues 182–202 (LALGLDLYLAIFILLAITAVF) form a helical membrane-spanning segment. The Cytoplasmic portion of the chain corresponds to 203-218 (TITGGLASVIYTDTLQ). The helical transmembrane segment at 219 to 239 (AIIMLVGSFILMIYAFVEVGG) threads the bilayer. The Extracellular portion of the chain corresponds to 240–288 (YESFTEKYMNAIPSVVEGDNLTISPKCYTPQPDSFHIFRDAVTGDIPWP). The helical transmembrane segment at 289–309 (GTAFGMPITALWYWCINQVIV) threads the bilayer. Residues 310-324 (QRCLCGKNMSHVKAA) lie on the Cytoplasmic side of the membrane. A helical membrane pass occupies residues 325-345 (CIVCGYLKLLPIFFMVMPGMI). The Extracellular portion of the chain corresponds to 346 to 378 (SRILYTDMVACVVPSECVKQCGVDVGCTNYAYP). A helical membrane pass occupies residues 379–399 (MLVLKLMPMGLRGLMLSVMLA). At 400 to 434 (SLMSSLTSIFNSASTLFTMDLYTKIRKKASERELL) the chain is on the cytoplasmic side. A helical transmembrane segment spans residues 435–455 (IAGRLFVSVLIVTSILWVPIV). Residues 456-467 (EVSQGGQLIHYT) are Extracellular-facing. A helical transmembrane segment spans residues 468 to 488 (EAISSYLGPPIAAVFLVAIFC). At 489-494 (KRVNEQ) the chain is on the cytoplasmic side. The helical transmembrane segment at 495 to 515 (GAFWGLMVGLVLGLIRMIAEF) threads the bilayer. Over 516 to 537 (SYGTGSCLAPSSCPKVICGVHY) the chain is Extracellular. The chain crosses the membrane as a helical span at residues 538–558 (LYYAIILFFVSILVILGVSYL). Residues 559–650 (TKPIPDVHLY…DTSEKPFWRT (92 aa)) are Cytoplasmic-facing. The span at 583–593 (DLDAEDREENE) shows a compositional bias: acidic residues. A disordered region spans residues 583 to 604 (DLDAEDREENEADARTEEDQTE). Residues 594-604 (ADARTEEDQTE) show a composition bias toward basic and acidic residues. Residues 651-671 (VVNVNVIVLLAVAAFFYGYFA) traverse the membrane as a helical segment.

It belongs to the sodium:solute symporter (SSF) (TC 2.A.21) family.

The protein resides in the cell membrane. Its function is as follows. Generates D-glucose-induced depolarization in a pH-dependent and Na(+)-independent manner, with activity in acidic conditions (pH 5) but not neutral conditions. In Rattus norvegicus (Rat), this protein is Solute carrier family 5 member 4.